We begin with the raw amino-acid sequence, 106 residues long: Synaptic plasticity regulator PANTS (106 aa).

The disordered stretch occupies residues 67–106; sequence LQQSEKTRLEGKQNNSPVWTLRKNPPPDWYLPLDPGKPRQ.

The protein belongs to the UPF0545 family. In terms of processing, rapidly degraded by proteolysis following neuronal stimulation, resulting in increased AMPA receptor clustering.

The protein resides in the synapse. Its subcellular location is the synaptic cleft. Its function is as follows. Negatively regulates long-term potentiation and modulates adult synaptic plasticity. This Xenopus laevis (African clawed frog) protein is Synaptic plasticity regulator PANTS.